A 1154-amino-acid chain; its full sequence is FERM domain-containing protein A (1154 aa).

Disordered stretches follow at residues 122–149 (NNNS…SSSS), 432–468 (NLSS…NHHN), 715–734 (NKNN…SSSS), 771–794 (SNSN…TSSS), and 961–980 (TNGS…NNGI). FERM domains lie at 218–547 (PLHQ…PSIQ) and 666–1103 (REIV…QTKL). Positions 437 to 447 (GGSGNGSGSGN) are enriched in gly residues. Residues 448–463 (GSSSSSSNSSSGNNNN) are compositionally biased toward low complexity.

Its function is as follows. Key regulator of adhesion dynamics, it acts as an anti-adhesive. Plays a critical role in the regulation of cell-cell adhesion, multi-cellular development and, in particular, the formation of the organising center known as the tip. Required for turnover of paxillin-adhesion sites during cell migration. Plays a major role in normal cell shape, cell-substrate adhesion and actin cytoskeleton organization. The sequence is that of FERM domain-containing protein A (frmA) from Dictyostelium discoideum (Social amoeba).